Reading from the N-terminus, the 525-residue chain is Exoglucanase 1 (525 aa).

Positions 1-18 (MRTAKFATLAALVASAAA) are cleaved as a signal peptide. Residues 19–467 (QQACSLTTER…AGNGGNNGGN (449 aa)) form a catalytic region. Glutamate 231 functions as the Nucleophile in the catalytic mechanism. Glutamate 236 acts as the Proton donor in catalysis. N-linked (GlcNAc...) asparagine glycosylation is present at asparagine 289. Residues 454–492 (GLPGAGNGGNNGGNPPPPTTTTSSAPATTTTASAGPKAG) form a disordered region. Residues 456–465 (PGAGNGGNNG) are compositionally biased toward gly residues. The segment at 468-489 (PPPPTTTTSSAPATTTTASAGP) is linker. Over residues 473-489 (TTTSSAPATTTTASAGP) the composition is skewed to low complexity. The CBM1 domain occupies 489–525 (PKAGRWQQCGGIGFTGPTQCEEPYICTKLNDWYSQCL). Disulfide bonds link cysteine 497/cysteine 514 and cysteine 508/cysteine 524.

Belongs to the glycosyl hydrolase 7 (cellulase C) family.

The catalysed reaction is Hydrolysis of (1-&gt;4)-beta-D-glucosidic linkages in cellulose and cellotetraose, releasing cellobiose from the non-reducing ends of the chains.. The biological conversion of cellulose to glucose generally requires three types of hydrolytic enzymes: (1) Endoglucanases which cut internal beta-1,4-glucosidic bonds; (2) Exocellobiohydrolases that cut the disaccharide cellobiose from the non-reducing end of the cellulose polymer chain; (3) Beta-1,4-glucosidases which hydrolyze the cellobiose and other short cello-oligosaccharides to glucose. This is Exoglucanase 1 (CBH-1) from Humicola insolens (Soft-rot fungus).